A 277-amino-acid polypeptide reads, in one-letter code: Large ribosomal subunit protein uL2 (277 aa).

Disordered regions lie at residues 37 to 58 (LHSK…GGGH) and 222 to 277 (GVAM…NRRR). The span at 268-277 (VRRRKQNRRR) shows a compositional bias: basic residues.

Belongs to the universal ribosomal protein uL2 family. In terms of assembly, part of the 50S ribosomal subunit. Forms a bridge to the 30S subunit in the 70S ribosome.

Functionally, one of the primary rRNA binding proteins. Required for association of the 30S and 50S subunits to form the 70S ribosome, for tRNA binding and peptide bond formation. It has been suggested to have peptidyltransferase activity; this is somewhat controversial. Makes several contacts with the 16S rRNA in the 70S ribosome. The protein is Large ribosomal subunit protein uL2 of Parafrankia sp. (strain EAN1pec).